The following is a 561-amino-acid chain: Arginine--tRNA ligase (561 aa).

The short motif at 136-146 (ANPTGLLHMGN) is the 'HIGH' region element.

Belongs to the class-I aminoacyl-tRNA synthetase family. As to quaternary structure, monomer.

The protein resides in the cytoplasm. It carries out the reaction tRNA(Arg) + L-arginine + ATP = L-arginyl-tRNA(Arg) + AMP + diphosphate. This chain is Arginine--tRNA ligase, found in Desulforamulus reducens (strain ATCC BAA-1160 / DSM 100696 / MI-1) (Desulfotomaculum reducens).